A 713-amino-acid polypeptide reads, in one-letter code: F-box/WD repeat-containing protein 7 (713 aa).

A disordered region spans residues 1–150; sequence MNQELLSVGS…DEHTHNSNVT (150 aa). Ser-26 is subject to Phosphoserine. Basic and acidic residues predominate over residues 46–55; sequence RHQEEEHTAR. Residues 69 to 84 are compositionally biased toward polar residues; the sequence is QNDSQQGQVEENNNRF. Residues 87-135 are compositionally biased toward acidic residues; the sequence is VDEDSSGNQEEQEEDEEHAGEQEEEEEEEEEEEEEEEMDQESDDFDQSD. The stretch at 94–136 forms a coiled coil; that stretch reads NQEEQEEDEEHAGEQEEEEEEEEEEEEEEEMDQESDDFDQSDD. The span at 136 to 145 shows a compositional bias: basic and acidic residues; it reads DSSREDEHTH. Residue Thr-211 is modified to Phosphothreonine. Ser-233 bears the Phosphoserine mark. One can recognise an F-box domain in the interval 284–330; sequence RDFISLLPKELALYVLSFLEPKDLLQAAQTCRYWRILAEDNLLWREK. WD repeat units lie at residues 384–424, 426–462, 465–504, 506–542, 545–584, 586–624, and 628–665; these read GHDD…RTLV, HTGG…CIHT, GHTS…HVLM, HVAA…CLHT, GHTN…HTLT, HQSL…QTLQ, and KHQS…FIRN.

As to quaternary structure, homodimer; homodimerization plays a role in substrate binding and/or ubiquitination and degradation. Component of the SCF(FBXW7) complex consisting of CUL1, RBX1, SKP1 and FBXW7. Interacts (via F-box domain) with SKP1. Interacts (via F-box domain) with pseudophosphatase STYX; the interaction is direct and prevents FBXW7 interaction with SKP1. Interacts with cyclin-E (CCNE1 or CCNE2). Interacts with PSEN1. Forms a trimeric complex with NOTCH1 and SGK1. Interacts with NOTCH1 intracellular domain/NICD and NOTCH4 intracellular domain/NICD. Interacts with NOTCH2 intracellular domain (N2ICD). Interacts with MYC (when phosphorylated). Interacts with USP28, counteracting ubiquitination of MYC. Interacts (when phosphorylated at Thr-211) with PIN1, disrupting FBXW7 dimerization and promoting FBXW7 autoubiquitination and degradation. Interacts with UBE2QL1. Interacts with FAM83D; promotes FBXW7 degradation. Interacts with MYCN; FBXW7 competes with AURKA for binding to unphosphorylated MYCN but not for binding to phosphorylated MYCN. Interacts with JUN. Found in a complex with JUN and PRR7. Interacts with JUN and PRR7; the interaction inhibits ubiquitination-mediated JUN degradation, promoting its phosphorylation and transcriptional activity. Interacts with NFE2L1. Interacts with NR1D1. Interacts with RICTOR; mediates RICTOR ubiquitination and degradation. Phosphorylation at Thr-211 promotes interaction with PIN1, leading to disrupt FBXW7 dimerization and promoting FBXW7 autoubiquitination and degradation. Phosphorylated by ATM at Ser-26 in response to DNA damage, promoting recruitment to DNA damage sites and 'Lys-63'-linked ubiquitination of phosphorylated XRCC4. Post-translationally, ubiquitinated: autoubiquitinates following phosphorylation at Thr-211 and subsequent interaction with PIN1. Ubiquitination leads to its degradation.

The protein localises to the nucleus. It is found in the nucleoplasm. Its subcellular location is the chromosome. It functions in the pathway protein modification; protein ubiquitination. Functionally, substrate recognition component of a SCF (SKP1-CUL1-F-box protein) E3 ubiquitin-protein ligase complex which mediates the ubiquitination and subsequent proteasomal degradation of target proteins. Recognizes and binds phosphorylated sites/phosphodegrons within target proteins and thereafter brings them to the SCF complex for ubiquitination. Identified substrates include cyclin-E (CCNE1 or CCNE2), JUN, MYC, NOTCH1 released notch intracellular domain (NICD), NOTCH2, MCL1, MLST8, RICTOR and probably PSEN1. Acts as a negative regulator of JNK signaling by binding to phosphorylated JUN and promoting its ubiquitination and subsequent degradation. SCF(FBXW7) complex mediates the ubiquitination and subsequent degradation of NFE2L1. Involved in bone homeostasis and negative regulation of osteoclast differentiation. Regulates the amplitude of the cyclic expression of hepatic core clock genes and genes involved in lipid and glucose metabolism via ubiquitination and proteasomal degradation of their transcriptional repressor NR1D1; CDK1-dependent phosphorylation of NR1D1 is necessary for SCF(FBXW7)-mediated ubiquitination. Also able to promote 'Lys-63'-linked ubiquitination in response to DNA damage. The SCF(FBXW7) complex facilitates double-strand break repair following phosphorylation by ATM: phosphorylation promotes localization to sites of double-strand breaks and 'Lys-63'-linked ubiquitination of phosphorylated XRCC4, enhancing DNA non-homologous end joining. The chain is F-box/WD repeat-containing protein 7 from Rattus norvegicus (Rat).